Consider the following 385-residue polypeptide: Sulfoquinovose monooxygenase (385 aa).

The disordered stretch occupies residues 366 to 385; that stretch reads AYGRVPSETPATPLGNGERH.

It belongs to the SsuD family. Homodimer.

The enzyme catalyses 6-sulfo-D-quinovose + FMNH2 + O2 = 6-dehydro-D-glucose + FMN + sulfite + H2O + 2 H(+). Its function is as follows. Part of the sulfoquinovose monooxygenase (sulfo-SMO) pathway, a D-sulfoquinovose degradation pathway that enables the complete utilization of all carbons within sulfoquinovose (SQ) with concomitant production of inorganic sulfite. Catalyzes the oxidative desulfurization of sulfoquinovose to sulfite and 6-dehydro-D-glucose. Is highly specific for sulfoquinovose and cannot use sulfoquinovosyl glycerol. FMNH(2) is provided by the FMN reductase SmoA. The polypeptide is Sulfoquinovose monooxygenase (Agrobacterium fabrum (strain C58 / ATCC 33970) (Agrobacterium tumefaciens (strain C58))).